Reading from the N-terminus, the 100-residue chain is Noncompact myelin-associated protein (100 aa).

Residues 1–28 are Extracellular-facing; that stretch reads MTTATTLGDAVFSLNMTRGEDILYKSSG. Residues 29–49 form a helical membrane-spanning segment; that stretch reads AIVAAIVVVVVIIVTLVLILL. At 50 to 100 the chain is on the cytoplasmic side; sequence KMYNRRMRTRRELEPKSPKPPVPPALDPNSNGSQQPAAVTSDPADVPVETR. Residues 58–100 are disordered; the sequence is TRRELEPKSPKPPVPPALDPNSNGSQQPAAVTSDPADVPVETR. The span at 77–87 shows a compositional bias: polar residues; that stretch reads PNSNGSQQPAA.

In terms of processing, glycosylated. As to expression, expressed in the peripheral nervous system Schwann cells (at protein level).

The protein resides in the cell membrane. Functionally, plays a role in myelin formation. The polypeptide is Noncompact myelin-associated protein (Ncmap) (Rattus norvegicus (Rat)).